The following is a 301-amino-acid chain: GTPase Era (301 aa).

The Era-type G domain maps to 4-173 (KAGFVALIGK…LECISKYLSP (170 aa)). The segment at 12–19 (GKPNAGKS) is G1. Residue 12–19 (GKPNAGKS) coordinates GTP. Positions 38 to 42 (NATRK) are G2. The segment at 64–67 (DTPG) is G3. Residues 64-68 (DTPGL) and 122-125 (SKID) each bind GTP. Residues 122-125 (SKID) are G4. Residues 152–154 (LSA) are G5. Positions 204–280 (LSDEIPYESD…FLNLQVIAQK (77 aa)) constitute a KH type-2 domain.

The protein belongs to the TRAFAC class TrmE-Era-EngA-EngB-Septin-like GTPase superfamily. Era GTPase family. As to quaternary structure, monomer.

The protein localises to the cytoplasm. Its subcellular location is the cell inner membrane. Functionally, an essential GTPase that binds both GDP and GTP, with rapid nucleotide exchange. Plays a role in 16S rRNA processing and 30S ribosomal subunit biogenesis and possibly also in cell cycle regulation and energy metabolism. The sequence is that of GTPase Era from Helicobacter pylori (strain G27).